Consider the following 215-residue polypeptide: Orotate phosphoribosyltransferase (215 aa).

Residue lysine 26 participates in 5-phospho-alpha-D-ribose 1-diphosphate binding. Residue 34-35 coordinates orotate; it reads FF. 5-phospho-alpha-D-ribose 1-diphosphate is bound by residues 72-73, arginine 99, lysine 100, lysine 103, histidine 105, and 124-132; these read YK and DDVITAGTA. 2 residues coordinate orotate: threonine 128 and arginine 156.

The protein belongs to the purine/pyrimidine phosphoribosyltransferase family. PyrE subfamily. Homodimer. Requires Mg(2+) as cofactor.

It carries out the reaction orotidine 5'-phosphate + diphosphate = orotate + 5-phospho-alpha-D-ribose 1-diphosphate. Its pathway is pyrimidine metabolism; UMP biosynthesis via de novo pathway; UMP from orotate: step 1/2. Catalyzes the transfer of a ribosyl phosphate group from 5-phosphoribose 1-diphosphate to orotate, leading to the formation of orotidine monophosphate (OMP). This is Orotate phosphoribosyltransferase from Shewanella oneidensis (strain ATCC 700550 / JCM 31522 / CIP 106686 / LMG 19005 / NCIMB 14063 / MR-1).